A 238-amino-acid chain; its full sequence is Ribosomal RNA small subunit methyltransferase G (238 aa).

Residues Gly-106, Leu-111, 157 to 158 (IE), and Arg-170 each bind S-adenosyl-L-methionine.

It belongs to the methyltransferase superfamily. RNA methyltransferase RsmG family.

The protein resides in the cytoplasm. It catalyses the reaction guanosine(527) in 16S rRNA + S-adenosyl-L-methionine = N(7)-methylguanosine(527) in 16S rRNA + S-adenosyl-L-homocysteine. In terms of biological role, specifically methylates the N7 position of guanine in position 527 of 16S rRNA. In Psychrobacter arcticus (strain DSM 17307 / VKM B-2377 / 273-4), this protein is Ribosomal RNA small subunit methyltransferase G.